Reading from the N-terminus, the 273-residue chain is Putative pyruvate, phosphate dikinase regulatory protein (273 aa).

149 to 156 (GPSRTSKT) contacts ADP.

Belongs to the pyruvate, phosphate/water dikinase regulatory protein family. PDRP subfamily.

The enzyme catalyses N(tele)-phospho-L-histidyl/L-threonyl-[pyruvate, phosphate dikinase] + ADP = N(tele)-phospho-L-histidyl/O-phospho-L-threonyl-[pyruvate, phosphate dikinase] + AMP + H(+). It carries out the reaction N(tele)-phospho-L-histidyl/O-phospho-L-threonyl-[pyruvate, phosphate dikinase] + phosphate + H(+) = N(tele)-phospho-L-histidyl/L-threonyl-[pyruvate, phosphate dikinase] + diphosphate. Bifunctional serine/threonine kinase and phosphorylase involved in the regulation of the pyruvate, phosphate dikinase (PPDK) by catalyzing its phosphorylation/dephosphorylation. This chain is Putative pyruvate, phosphate dikinase regulatory protein, found in Rickettsia bellii (strain RML369-C).